A 135-amino-acid polypeptide reads, in one-letter code: ATP synthase epsilon chain (135 aa).

This sequence belongs to the ATPase epsilon chain family. F-type ATPases have 2 components, CF(1) - the catalytic core - and CF(0) - the membrane proton channel. CF(1) has five subunits: alpha(3), beta(3), gamma(1), delta(1), epsilon(1). CF(0) has three main subunits: a, b and c.

The protein localises to the cell inner membrane. Its function is as follows. Produces ATP from ADP in the presence of a proton gradient across the membrane. This Mesorhizobium japonicum (strain LMG 29417 / CECT 9101 / MAFF 303099) (Mesorhizobium loti (strain MAFF 303099)) protein is ATP synthase epsilon chain.